We begin with the raw amino-acid sequence, 302 residues long: Probable 2-(5''-triphosphoribosyl)-3'-dephosphocoenzyme-A synthase (302 aa).

The protein belongs to the CitG/MdcB family.

The enzyme catalyses 3'-dephospho-CoA + ATP = 2'-(5''-triphospho-alpha-D-ribosyl)-3'-dephospho-CoA + adenine. In Salmonella gallinarum (strain 287/91 / NCTC 13346), this protein is Probable 2-(5''-triphosphoribosyl)-3'-dephosphocoenzyme-A synthase.